A 343-amino-acid chain; its full sequence is Aspartate carbamoyltransferase catalytic subunit (343 aa).

R91 and T92 together coordinate carbamoyl phosphate. An L-aspartate-binding site is contributed by K119. Positions 141, 171, and 174 each coordinate carbamoyl phosphate. 2 residues coordinate L-aspartate: R204 and R259. Positions 300 and 301 each coordinate carbamoyl phosphate.

The protein belongs to the aspartate/ornithine carbamoyltransferase superfamily. ATCase family. As to quaternary structure, heterododecamer (2C3:3R2) of six catalytic PyrB chains organized as two trimers (C3), and six regulatory PyrI chains organized as three dimers (R2).

The enzyme catalyses carbamoyl phosphate + L-aspartate = N-carbamoyl-L-aspartate + phosphate + H(+). Its pathway is pyrimidine metabolism; UMP biosynthesis via de novo pathway; (S)-dihydroorotate from bicarbonate: step 2/3. Its function is as follows. Catalyzes the condensation of carbamoyl phosphate and aspartate to form carbamoyl aspartate and inorganic phosphate, the committed step in the de novo pyrimidine nucleotide biosynthesis pathway. This Burkholderia orbicola (strain MC0-3) protein is Aspartate carbamoyltransferase catalytic subunit.